Consider the following 130-residue polypeptide: Cuticle protein 14 isoform b (130 aa).

Positions 24–90 (IGNYNFGYNE…NVHTNEPGTD (67 aa)) constitute a Chitin-binding type R&amp;R domain.

This chain is Cuticle protein 14 isoform b, found in Limulus polyphemus (Atlantic horseshoe crab).